A 759-amino-acid chain; its full sequence is Phosphoribosylformylglycinamidine synthase subunit PurL (759 aa).

Histidine 48 is a catalytic residue. Residues tyrosine 51 and lysine 91 each contribute to the ATP site. Residue glutamate 93 coordinates Mg(2+). Substrate contacts are provided by residues 94–97 and arginine 116; that span reads SHNH. Histidine 95 functions as the Proton acceptor in the catalytic mechanism. Position 117 (aspartate 117) interacts with Mg(2+). Substrate is bound at residue glutamine 240. Aspartate 268 lines the Mg(2+) pocket. 317–319 lines the substrate pocket; the sequence is ESQ. Positions 501 and 538 each coordinate ATP. Asparagine 539 contacts Mg(2+). Serine 541 is a binding site for substrate.

It belongs to the FGAMS family. As to quaternary structure, monomer. Part of the FGAM synthase complex composed of 1 PurL, 1 PurQ and 2 PurS subunits.

It localises to the cytoplasm. It catalyses the reaction N(2)-formyl-N(1)-(5-phospho-beta-D-ribosyl)glycinamide + L-glutamine + ATP + H2O = 2-formamido-N(1)-(5-O-phospho-beta-D-ribosyl)acetamidine + L-glutamate + ADP + phosphate + H(+). The protein operates within purine metabolism; IMP biosynthesis via de novo pathway; 5-amino-1-(5-phospho-D-ribosyl)imidazole from N(2)-formyl-N(1)-(5-phospho-D-ribosyl)glycinamide: step 1/2. In terms of biological role, part of the phosphoribosylformylglycinamidine synthase complex involved in the purines biosynthetic pathway. Catalyzes the ATP-dependent conversion of formylglycinamide ribonucleotide (FGAR) and glutamine to yield formylglycinamidine ribonucleotide (FGAM) and glutamate. The FGAM synthase complex is composed of three subunits. PurQ produces an ammonia molecule by converting glutamine to glutamate. PurL transfers the ammonia molecule to FGAR to form FGAM in an ATP-dependent manner. PurS interacts with PurQ and PurL and is thought to assist in the transfer of the ammonia molecule from PurQ to PurL. The sequence is that of Phosphoribosylformylglycinamidine synthase subunit PurL from Chlorobaculum tepidum (strain ATCC 49652 / DSM 12025 / NBRC 103806 / TLS) (Chlorobium tepidum).